The following is a 515-amino-acid chain: ATP synthase subunit alpha (515 aa).

171–178 (GDRQTGKT) contributes to the ATP binding site.

The protein belongs to the ATPase alpha/beta chains family. F-type ATPases have 2 components, CF(1) - the catalytic core - and CF(0) - the membrane proton channel. CF(1) has five subunits: alpha(3), beta(3), gamma(1), delta(1), epsilon(1). CF(0) has three main subunits: a(1), b(2) and c(9-12). The alpha and beta chains form an alternating ring which encloses part of the gamma chain. CF(1) is attached to CF(0) by a central stalk formed by the gamma and epsilon chains, while a peripheral stalk is formed by the delta and b chains.

The protein localises to the cell membrane. The catalysed reaction is ATP + H2O + 4 H(+)(in) = ADP + phosphate + 5 H(+)(out). Its function is as follows. Produces ATP from ADP in the presence of a proton gradient across the membrane. The alpha chain is a regulatory subunit. The protein is ATP synthase subunit alpha of Stenotrophomonas maltophilia (strain K279a).